The following is a 425-amino-acid chain: Serine hydroxymethyltransferase (425 aa).

Residues Leu-120 and 124–126 (GHL) contribute to the (6S)-5,6,7,8-tetrahydrofolate site. The residue at position 229 (Lys-229) is an N6-(pyridoxal phosphate)lysine. (6S)-5,6,7,8-tetrahydrofolate is bound at residue 353 to 355 (SPF).

It belongs to the SHMT family. As to quaternary structure, homodimer. Pyridoxal 5'-phosphate is required as a cofactor.

It is found in the cytoplasm. The catalysed reaction is (6R)-5,10-methylene-5,6,7,8-tetrahydrofolate + glycine + H2O = (6S)-5,6,7,8-tetrahydrofolate + L-serine. It participates in one-carbon metabolism; tetrahydrofolate interconversion. Its pathway is amino-acid biosynthesis; glycine biosynthesis; glycine from L-serine: step 1/1. Its function is as follows. Catalyzes the reversible interconversion of serine and glycine with tetrahydrofolate (THF) serving as the one-carbon carrier. This reaction serves as the major source of one-carbon groups required for the biosynthesis of purines, thymidylate, methionine, and other important biomolecules. Also exhibits THF-independent aldolase activity toward beta-hydroxyamino acids, producing glycine and aldehydes, via a retro-aldol mechanism. The protein is Serine hydroxymethyltransferase of Thermosynechococcus vestitus (strain NIES-2133 / IAM M-273 / BP-1).